The sequence spans 193 residues: dCTP deaminase (193 aa).

DCTP is bound by residues 110–115 (RSSLAR), Asp-128, 136–138 (VLE), Tyr-171, Lys-178, and Gln-182. Residue Glu-138 is the Proton donor/acceptor of the active site. The tract at residues 169–193 (RPYNRRQDAKYRDQQGAVASRIDKD) is disordered.

It belongs to the dCTP deaminase family. Homotrimer.

It carries out the reaction dCTP + H2O + H(+) = dUTP + NH4(+). The protein operates within pyrimidine metabolism; dUMP biosynthesis; dUMP from dCTP (dUTP route): step 1/2. Catalyzes the deamination of dCTP to dUTP. The sequence is that of dCTP deaminase from Citrobacter koseri (strain ATCC BAA-895 / CDC 4225-83 / SGSC4696).